The sequence spans 228 residues: Ribulose-phosphate 3-epimerase (228 aa).

S11 provides a ligand contact to substrate. A divalent metal cation is bound by residues H36, D38, and H69. D38 (proton acceptor) is an active-site residue. Substrate is bound by residues H69, 145–148 (GFCG), 180–182 (DGG), and 202–203 (AS). Residue D180 participates in a divalent metal cation binding. Catalysis depends on D180, which acts as the Proton donor.

It belongs to the ribulose-phosphate 3-epimerase family. A divalent metal cation is required as a cofactor.

It catalyses the reaction D-ribulose 5-phosphate = D-xylulose 5-phosphate. It functions in the pathway carbohydrate degradation. Its function is as follows. Catalyzes the reversible epimerization of D-ribulose 5-phosphate to D-xylulose 5-phosphate. This chain is Ribulose-phosphate 3-epimerase, found in Chlamydia muridarum (strain MoPn / Nigg).